A 298-amino-acid chain; its full sequence is Lipoyl synthase (298 aa).

[4Fe-4S] cluster contacts are provided by Cys-40, Cys-45, Cys-51, Cys-67, Cys-71, Cys-74, and Ser-280. The Radical SAM core domain maps to 53–269 (AVRKTATFMI…KEIALSKGFS (217 aa)).

This sequence belongs to the radical SAM superfamily. Lipoyl synthase family. [4Fe-4S] cluster is required as a cofactor.

It is found in the cytoplasm. The catalysed reaction is [[Fe-S] cluster scaffold protein carrying a second [4Fe-4S](2+) cluster] + N(6)-octanoyl-L-lysyl-[protein] + 2 oxidized [2Fe-2S]-[ferredoxin] + 2 S-adenosyl-L-methionine + 4 H(+) = [[Fe-S] cluster scaffold protein] + N(6)-[(R)-dihydrolipoyl]-L-lysyl-[protein] + 4 Fe(3+) + 2 hydrogen sulfide + 2 5'-deoxyadenosine + 2 L-methionine + 2 reduced [2Fe-2S]-[ferredoxin]. The protein operates within protein modification; protein lipoylation via endogenous pathway; protein N(6)-(lipoyl)lysine from octanoyl-[acyl-carrier-protein]. Functionally, catalyzes the radical-mediated insertion of two sulfur atoms into the C-6 and C-8 positions of the octanoyl moiety bound to the lipoyl domains of lipoate-dependent enzymes, thereby converting the octanoylated domains into lipoylated derivatives. This Bacillus anthracis (strain A0248) protein is Lipoyl synthase.